A 759-amino-acid polypeptide reads, in one-letter code: Glycerol-3-phosphate O-acyltransferase 1 (759 aa).

Residues 1–48 lie on the Lumenal side of the membrane; it reads MPAPKLTEKFASSKSTQKTTNYSSIEAKSVKTSADQAYIYQEPSATKK. The helical transmembrane segment at 49 to 69 threads the bilayer; sequence ILYSIATWLLYNIFHCFFREI. The Cytoplasmic portion of the chain corresponds to 70–434; the sequence is RGRGSFKVPQ…AKVNFAKNLG (365 aa). The short motif at 414-419 is the HXXXXD motif element; sequence HYNLPD. A helical transmembrane segment spans residues 435 to 449; sequence LVFFRSIGLCILFSL. A topological domain (lumenal) is located at residue Ala-450. The chain crosses the membrane as a helical span at residues 451-465; the sequence is MPGIIMFSPVFILAK. Residues 466-493 lie on the Cytoplasmic side of the membrane; it reads RISQEKARTALSKSTVKIKANDVIATWK. A helical membrane pass occupies residues 494-514; that stretch reads ILIGMGFAPLLYIFWSVLITY. At 515-523 the chain is on the lumenal side; sequence YLRHKPWNK. Residues 524–544 traverse the membrane as a helical segment; the sequence is IYVFSGSYISCVIVTYSALIV. Topologically, residues 545–759 are cytoplasmic; the sequence is GDIGMDGFKS…EEEEGKEGDA (215 aa). Disordered stretches follow at residues 613-667, 684-705, and 729-759; these read EEDR…SLVN, RKSE…EFEV, and IGEN…EGDA. The segment covering 647 to 659 has biased composition (basic and acidic residues); it reads RDNHDAYEHHNQD. Residues 688–702 are compositionally biased toward low complexity; it reads SSLASTSVAPSSSSE. The span at 736-759 shows a compositional bias: acidic residues; the sequence is EEEEEEEEEEEEEEEEEEGKEGDA.

Belongs to the GPAT/DAPAT family.

The protein localises to the endoplasmic reticulum membrane. The catalysed reaction is sn-glycerol 3-phosphate + an acyl-CoA = a 1-acyl-sn-glycero-3-phosphate + CoA. It catalyses the reaction dihydroxyacetone phosphate + an acyl-CoA = a 1-acylglycerone 3-phosphate + CoA. The enzyme catalyses sn-glycerol 3-phosphate + hexadecanoyl-CoA = 1-hexadecanoyl-sn-glycero-3-phosphate + CoA. It carries out the reaction (9Z)-hexadecenoyl-CoA + sn-glycerol 3-phosphate = 1-(9Z-hexadecenoyl)-sn-glycero-3-phosphate + CoA. The catalysed reaction is sn-glycerol 3-phosphate + octadecanoyl-CoA = 1-octadecanoyl-sn-glycero-3-phosphate + CoA. It catalyses the reaction sn-glycerol 3-phosphate + (9Z)-octadecenoyl-CoA = 1-(9Z-octadecenoyl)-sn-glycero-3-phosphate + CoA. It functions in the pathway phospholipid metabolism; CDP-diacylglycerol biosynthesis; CDP-diacylglycerol from sn-glycerol 3-phosphate: step 1/3. Its function is as follows. Dual substrate-specific glycerol-3-phosphate/dihydroxyacetone phosphate sn-1 acyltransferase, catalyzing the first and committed reaction in the de novo synthesis of glycerophospholipids and triacylglycerols (TAGs). Prefers Gly-3-P over dihydroxyacetone phosphate and has a marked preference for 16-carbon fatty acyl chains. Transfers a fatty acid from fatty acyl-CoA to the sn-1 position of glycerol-3-phosphate to produce lysophosphatidic acid (LysoPA). These lipids not only are precursors of glycerolipids, but also are dynamic components of signal transduction systems that control cell physiology. SCT1 is the primary supplier of diacylglycerols (DAG), used mainly in TAG synthesis and phosphatidylcholine (PC) synthesis through the CDP-choline pathway. Regulates fatty acid desaturation, that is, the ratio of unsaturated versus saturated fatty acyl chains, by competing with the desaturase OLE1 for the common substrate C16:0-CoA. Sequesters C16:0-CoA into lipids, thereby shielding it from desaturation by OLE1. This Saccharomyces cerevisiae (strain ATCC 204508 / S288c) (Baker's yeast) protein is Glycerol-3-phosphate O-acyltransferase 1.